Reading from the N-terminus, the 1293-residue chain is Phosphoribosylformylglycinamidine synthase (1293 aa).

ATP-binding positions include 305-316 (GAATGSGGEIRD) and Ala676. Residues 305 to 327 (GAATGSGGEIRDEGATGRGSKPK) are disordered. Mg(2+)-binding residues include Asp677, Glu716, Asn720, and Asp884. Ser886 serves as a coordination point for ATP. A Glutamine amidotransferase type-1 domain is found at 1040 to 1293 (MAILREQGVN…MFRNARVNLG (254 aa)). The active-site Nucleophile is Cys1133. Catalysis depends on residues His1258 and Glu1260.

In the N-terminal section; belongs to the FGAMS family. Monomer.

The protein localises to the cytoplasm. The catalysed reaction is N(2)-formyl-N(1)-(5-phospho-beta-D-ribosyl)glycinamide + L-glutamine + ATP + H2O = 2-formamido-N(1)-(5-O-phospho-beta-D-ribosyl)acetamidine + L-glutamate + ADP + phosphate + H(+). The protein operates within purine metabolism; IMP biosynthesis via de novo pathway; 5-amino-1-(5-phospho-D-ribosyl)imidazole from N(2)-formyl-N(1)-(5-phospho-D-ribosyl)glycinamide: step 1/2. Phosphoribosylformylglycinamidine synthase involved in the purines biosynthetic pathway. Catalyzes the ATP-dependent conversion of formylglycinamide ribonucleotide (FGAR) and glutamine to yield formylglycinamidine ribonucleotide (FGAM) and glutamate. The chain is Phosphoribosylformylglycinamidine synthase from Shewanella oneidensis (strain ATCC 700550 / JCM 31522 / CIP 106686 / LMG 19005 / NCIMB 14063 / MR-1).